The chain runs to 242 residues: uncharacterized protein (242 aa).

Polar residues predominate over residues 57–67 (SPTSQKTSASG). The interval 57-78 (SPTSQKTSASGQEEPDPLHDKS) is disordered. Residues 76 to 188 (DKSSGLIQRF…GYMSTPPPVK (113 aa)) form the DUF1279 domain. A helical membrane pass occupies residues 92 to 114 (YGKVMIPVHLLTSTMWFGTFYYA). Positions 188–237 (KEYLQEKMEETKERISGKMEETKDRFSERMEETKDKFNEKLQETKDKVSF) form a coiled coil. Positions 198–236 (TKERISGKMEETKDRFSERMEETKDKFNEKLQETKDKVS) are enriched in basic and acidic residues. The tract at residues 198–242 (TKERISGKMEETKDRFSERMEETKDKFNEKLQETKDKVSFRKKKE) is disordered.

The protein resides in the membrane. This is an uncharacterized protein from Danio rerio (Zebrafish).